A 576-amino-acid chain; its full sequence is MEGSKLLPCVHKSPVPTSHQLYINYEILGLTKLKKHKYTQNKMSSSDSSSAESRLATAKTVLTTAASVAATAMLARSLVQDYLPDEVHHYISYGFRSIFGYFSSQMTIIIEEFEGFAHNEVFEAAEAYLATKISPSNKRIKVSKHEKENNYNVTVERDEEVVDTYNGVKFQWILHCRHVESKHFHNPRDLNSTLRSEVRSFELNFHKKFKDVALESYLPFMVKRATLMKQEKKTLKIFTLSPENMYGNYSDAWTSVTLDHPSTFKTLAMDSDVKTSVMEDLDKFVKRRDFYKRVGKAWKRGYLLYGPPGTGKSSLIAAMANHLNFDIYDLELTAVNNNSELRRLLIATANRSILIVEDIDCSLELKDRTSDEPPRESDDIEDPRYKKVTLSGLLNFIDGLWSSCGDERIIIFTTNYKEKLDAALLRPGRMDMHIHMSYCTPSTFKALALNYLEIKEHRLFSKIEEGIEATEVTPAEVAEQLMRNDSVDKVLEGLIEFLKVKKIENEQDKAKTEKQELENKKKTKEGTDSVVKKEVDEQLVRNDRVDKVLEGLVELLKAKKIEDDQDKAKHEEVEQH.

Residues 55-75 traverse the membrane as a helical segment; it reads LATAKTVLTTAASVAATAMLA. Position 306-313 (306-313) interacts with ATP; that stretch reads GPPGTGKS. The disordered stretch occupies residues 508–532; the sequence is DKAKTEKQELENKKKTKEGTDSVVK.

Belongs to the AAA ATPase family. BCS1 subfamily. Binds to the Yariv phenylglycoside (beta-D-Glc)(3). The cofactor is Mg(2+).

The protein localises to the membrane. It catalyses the reaction ATP + H2O = ADP + phosphate + H(+). In Arabidopsis thaliana (Mouse-ear cress), this protein is Protein HYPER-SENSITIVITY-RELATED 4.